The sequence spans 287 residues: Formamidopyrimidine-DNA glycosylase (287 aa).

The active-site Schiff-base intermediate with DNA is the Pro2. The active-site Proton donor is Glu3. The active-site Proton donor; for beta-elimination activity is the Lys60. His100 and Arg119 together coordinate DNA. An FPG-type zinc finger spans residues 249 to 283 (QVYGREGEPCRHCGTVIAKIKLGGRSAHFCPQCQP). Catalysis depends on Arg273, which acts as the Proton donor; for delta-elimination activity.

The protein belongs to the FPG family. In terms of assembly, monomer. Zn(2+) is required as a cofactor.

It catalyses the reaction Hydrolysis of DNA containing ring-opened 7-methylguanine residues, releasing 2,6-diamino-4-hydroxy-5-(N-methyl)formamidopyrimidine.. The enzyme catalyses 2'-deoxyribonucleotide-(2'-deoxyribose 5'-phosphate)-2'-deoxyribonucleotide-DNA = a 3'-end 2'-deoxyribonucleotide-(2,3-dehydro-2,3-deoxyribose 5'-phosphate)-DNA + a 5'-end 5'-phospho-2'-deoxyribonucleoside-DNA + H(+). Its function is as follows. Involved in base excision repair of DNA damaged by oxidation or by mutagenic agents. Acts as a DNA glycosylase that recognizes and removes damaged bases. Has a preference for oxidized purines, such as 7,8-dihydro-8-oxoguanine (8-oxoG). Has AP (apurinic/apyrimidinic) lyase activity and introduces nicks in the DNA strand. Cleaves the DNA backbone by beta-delta elimination to generate a single-strand break at the site of the removed base with both 3'- and 5'-phosphates. In Synechocystis sp. (strain ATCC 27184 / PCC 6803 / Kazusa), this protein is Formamidopyrimidine-DNA glycosylase (mutM).